A 95-amino-acid polypeptide reads, in one-letter code: UPF0358 protein GK1077 (95 aa).

The protein belongs to the UPF0358 family.

This is UPF0358 protein GK1077 from Geobacillus kaustophilus (strain HTA426).